We begin with the raw amino-acid sequence, 396 residues long: MSTFNSYSQPKESNDNSHNNVNKSKSLLDIIFGTNVSEWAFSENALMKAMDLKIEQEKTKQQYYKLENLNRSIELFKLASSSGLPINQIHKLFNTDHGVPASSPMKAGGNQPHNNTEGTQSSENLPRLNGSMKSLKPLNMNTVSPTPMSRQPSPYKFPASSSTGGISHSTVTNVQRRANSPARIGASAVAALNDNISIKEEDVARRIPSGTKSQESPLNKKPTSLHSRNLSLPIGKFTNPNIPSTMTSILSFNRDQQQPLSQPLPPPPQQQQDLHTHNLHTIPRKPGMVQKKHRRARSTSSFGVIDLSIIDEAKEKQVQRSPSPIHSNVSVALTSHDKPIESNMKEQPNMLQSVREGRQVHDDLDDRTCSESSSRNESPVRTITKDNSVGKILNST.

Disordered regions lie at residues 1–22 (MSTF…NNVN), 98–126 (GVPA…ENLP), 145–168 (PTPM…GISH), 203–239 (VARR…KFTN), 254–274 (RDQQ…QQDL), and 355–396 (REGR…LNST). 3 stretches are compositionally biased toward polar residues: residues 111 to 124 (QPHN…SSEN), 159 to 168 (ASSSTGGISH), and 210 to 230 (GTKS…SRNL). Over residues 355-369 (REGRQVHDDLDDRTC) the composition is skewed to basic and acidic residues. The span at 370-396 (SESSSRNESPVRTITKDNSVGKILNST) shows a compositional bias: polar residues.

The protein localises to the cytoplasm. It is found in the nucleus. Involved in resistance to methylmercury. Overexpression suppresses a PAM1-SLV3 double null mutation. The polypeptide is Protein BOP3 (BOP3) (Saccharomyces cerevisiae (strain ATCC 204508 / S288c) (Baker's yeast)).